A 230-amino-acid polypeptide reads, in one-letter code: Probable GTP-binding protein EngB (230 aa).

The EngB-type G domain occupies Glu36–Ile224. GTP is bound by residues Gly44–Ser51, Gly69–Lys73, Asp86–Gly89, Asn166–Asp169, and Val201–Ala203. Mg(2+)-binding residues include Ser51 and Thr71.

This sequence belongs to the TRAFAC class TrmE-Era-EngA-EngB-Septin-like GTPase superfamily. EngB GTPase family. Requires Mg(2+) as cofactor.

Functionally, necessary for normal cell division and for the maintenance of normal septation. The polypeptide is Probable GTP-binding protein EngB (Methanococcus maripaludis (strain DSM 14266 / JCM 13030 / NBRC 101832 / S2 / LL)).